The primary structure comprises 530 residues: Autoinducer-2 kinase (530 aa).

Belongs to the FGGY kinase family.

It is found in the cytoplasm. It carries out the reaction (S)-4,5-dihydroxypentane-2,3-dione + ATP = (2S)-2-hydroxy-3,4-dioxopentyl phosphate + ADP + H(+). In terms of biological role, catalyzes the phosphorylation of autoinducer-2 (AI-2) to phospho-AI-2, which subsequently inactivates the transcriptional regulator LsrR and leads to the transcription of the lsr operon. Phosphorylates the ring-open form of (S)-4,5-dihydroxypentane-2,3-dione (DPD), which is the precursor to all AI-2 signaling molecules, at the C5 position. This Yersinia pestis bv. Antiqua (strain Antiqua) protein is Autoinducer-2 kinase.